We begin with the raw amino-acid sequence, 311 residues long: Ribonuclease 3 (311 aa).

One can recognise an RNase III domain in the interval 20-145; that stretch reads YLCFYRILGF…FIGAIYLDQG (126 aa). A Mg(2+)-binding site is contributed by E62. Residue D66 is part of the active site. Residues N131 and E134 each coordinate Mg(2+). Residue E134 is part of the active site. The 70-residue stretch at 173–242 folds into the DRBM domain; that stretch reads NFKSKLIEWS…AQMAIKKVKD (70 aa). The tract at residues 250-311 is disordered; the sequence is NEAKSQHSKP…EVEATETEKE (62 aa). Residues 262–288 are compositionally biased toward acidic residues; the sequence is VETESVEPELTESETMEPDTLETEAPE.

It belongs to the ribonuclease III family. Homodimer. Mg(2+) serves as cofactor.

Its subcellular location is the cytoplasm. The enzyme catalyses Endonucleolytic cleavage to 5'-phosphomonoester.. Digests double-stranded RNA. Involved in the processing of primary rRNA transcript to yield the immediate precursors to the large and small rRNAs (23S and 16S). Processes some mRNAs, and tRNAs when they are encoded in the rRNA operon. Processes pre-crRNA and tracrRNA of type II CRISPR loci if present in the organism. In Bacteroides thetaiotaomicron (strain ATCC 29148 / DSM 2079 / JCM 5827 / CCUG 10774 / NCTC 10582 / VPI-5482 / E50), this protein is Ribonuclease 3.